The primary structure comprises 186 residues: Casparian strip membrane protein 5 (186 aa).

Topologically, residues 1–23 (MEHGEISSKAPLVAPVAAGVNRA) are cytoplasmic. Residues 24 to 44 (VAVVDTFLRFIAIIGTIGSAI) form a helical membrane-spanning segment. At 45-73 (AMGTTNETLPFFTQFIQFEAKYSDLPSFT) the chain is on the extracellular side. A glycan (N-linked (GlcNAc...) asparagine) is linked at asparagine 50. Residues 74 to 94 (FFVAANAVVCTYLVLSIPLSI) form a helical membrane-spanning segment. Over 95–106 (VHILRPRARYSR) the chain is Cytoplasmic. A helical transmembrane segment spans residues 107 to 127 (LFLVFFDTAMLALLTAGASAA). The Extracellular segment spans residues 128–160 (AAIVYLAHKGNVRANWFSICQQFDSFCERISGS). The chain crosses the membrane as a helical span at residues 161–181 (LIGSFAAMVLLVVLITLSAFA). At 182 to 186 (LARRH) the chain is on the cytoplasmic side.

Belongs to the Casparian strip membrane proteins (CASP) family. In terms of assembly, homodimer and heterodimers.

It localises to the cell membrane. Regulates membrane-cell wall junctions and localized cell wall deposition. Required for establishment of the Casparian strip membrane domain (CSD) and the subsequent formation of Casparian strips, a cell wall modification of the root endodermis that determines an apoplastic barrier between the intraorganismal apoplasm and the extraorganismal apoplasm and prevents lateral diffusion. This Oryza sativa subsp. japonica (Rice) protein is Casparian strip membrane protein 5.